Reading from the N-terminus, the 337-residue chain is Protein hairy (337 aa).

Residues 29-48 (KSDRRSNKPIMEKRRRARIN) form an interaction with Topors region. In terms of domain architecture, bHLH spans 31 to 88 (DRRSNKPIMEKRRRARINNCLNELKTLILDATKKDPARHSKLEKADILEKTVKHLQEL). The region spanning 107 to 136 (FKAGFADCVNEVSRFPGIEPAQRRRLLQHL) is the Orange domain. 2 disordered regions span residues 146-178 (ELHQQQRQQQQQSIHAQMLPSPPSSPEQDSQQG) and 259-311 (MPQR…VIQR). A compositionally biased stretch (low complexity) spans 263 to 301 (TASTGSASSHSSAGYESAPGSSSSCSYAPPSPANSSYEP). The short motif at 334–337 (WRPW) is the WRPW motif element.

Transcription repression requires formation of a complex with a corepressor protein (Groucho). Interacts with gro (via WPRW motif) and Topors. In terms of processing, ubiquitinated by Topors.

Its subcellular location is the nucleus. Its function is as follows. Pair-rule protein that regulates embryonic segmentation and adult bristle patterning. Transcriptional repressor of genes that require a bHLH protein for their transcription (e.g. ftz). The chain is Protein hairy from Drosophila melanogaster (Fruit fly).